The chain runs to 184 residues: Protein DMP2 (184 aa).

The next 4 helical transmembrane spans lie at 19 to 39, 45 to 65, 105 to 125, and 142 to 162; these read LIKLLPTGTVFLFQFLNPVLT, LLINKYLTGVLIVICAFSCCF, VGDFVHAFFSLIVFSVISLLD, and IFLMVLPPVIGVISGAVFTVF.

Belongs to the plant DMP1 protein family. As to expression, expressed constitutively in leaves, stems, flowers, siliques and roots.

It is found in the endoplasmic reticulum membrane. The protein localises to the vacuole membrane. Functionally, involved in membrane remodeling. This chain is Protein DMP2, found in Arabidopsis thaliana (Mouse-ear cress).